Consider the following 63-residue polypeptide: Bowman-Birk type proteinase inhibitor (63 aa).

7 disulfide bridges follow: cysteine 7–cysteine 60, cysteine 8–cysteine 23, cysteine 11–cysteine 56, cysteine 13–cysteine 21, cysteine 30–cysteine 37, cysteine 34–cysteine 49, and cysteine 39–cysteine 47.

Monomer.

Its function is as follows. Inhibits trypsin stoichiometrically at the molar ratio of 1:2, with a dissociation constant of 4.2 nM. Does not inhibit chymotrypsin. The polypeptide is Bowman-Birk type proteinase inhibitor (Lupinus albus (White lupine)).